Here is a 212-residue protein sequence, read N- to C-terminus: Prolactin (212 aa).

An N-terminal signal peptide occupies residues 1–26 (MARCCKCPRLHLAVTVLACVLVFTEG). Cystine bridges form between cysteine 71/cysteine 185 and cysteine 202/cysteine 212.

Belongs to the somatotropin/prolactin family. Pituitary gland.

The protein localises to the secreted. The protein is Prolactin (prl) of Ictalurus punctatus (Channel catfish).